The sequence spans 157 residues: Protein Smg homolog (157 aa).

This sequence belongs to the Smg family.

The protein is Protein Smg homolog of Idiomarina loihiensis (strain ATCC BAA-735 / DSM 15497 / L2-TR).